We begin with the raw amino-acid sequence, 485 residues long: E3 ubiquitin-protein ligase TRIM34A (485 aa).

Residues 15-59 form an RING-type zinc finger; that stretch reads CPVCQELLTKALSLGCGHRVCQACLITKKNAVINPREKSSCPVCG. Residues 91–132 form a B box-type zinc finger; the sequence is TKRDLCVHHGEKLLLFCKEDKKAICWVCERSQEHRGHHTFLW. Zn(2+) is bound by residues cysteine 96, histidine 99, cysteine 118, and histidine 124. Positions 136–170 form a coiled coil; the sequence is VRECQENLQKALTRLRKEQEKVETLEADIKEDRLS. Positions 282 to 485 constitute a B30.2/SPRY domain; sequence LSGMLQKFRE…APMTLCPLNS (204 aa).

It belongs to the TRIM/RBCC family. In terms of assembly, homotrimer. Interacts (via B-box and SPRY domain) with TRIM5.

The protein resides in the cytoplasm. It is found in the mitochondrion. The catalysed reaction is S-ubiquitinyl-[E2 ubiquitin-conjugating enzyme]-L-cysteine + [acceptor protein]-L-lysine = [E2 ubiquitin-conjugating enzyme]-L-cysteine + N(6)-ubiquitinyl-[acceptor protein]-L-lysine.. It participates in protein modification; protein ubiquitination. In terms of biological role, functions as antiviral protein and contributes to the defense against retroviral infections. Acts as a capsid-specific restriction factor with the help of TRIM5 and prevents infection from non-host-adapted retroviruses. During influenza A virus infection, promotes programmed cell death by targeting ZBP1 for 'Lys-63'-linked polyubiquitination. In turn, promotes ZBP1 recruitment of RIPK3 to mediate virus-induced programmed necrosis. Negatively regulates the function of mitochondria by enhancing mitochondrial depolarization leading to cytochrome c release and mitochondria-dependent apoptosis. Also promotes the formation of multinucleated giant cells by means of cell fusion and phagocytosis in epithelial cells. Plays an essential role in sustaining the integrity of the inner mucus layer in the colon by controlling the exocytosis of the major component of colonic mucus MUC2 from colonic goblet cells. In Mus musculus (Mouse), this protein is E3 ubiquitin-protein ligase TRIM34A.